Consider the following 434-residue polypeptide: MTAYKGEVFNLPPDKSISHRAALIGALADGTTEISNFSGGFDNQSTLGVLQACGIRLSQDIVQGADGRQTRHVVLHSSGLWSFSAPDAPLMCNNSGSTMRMFAGILAGQPFDSTLVGDNSLMKRPMKRIADPLRRMGAGISLSPDGTAPVGINGTRDLKPITYELPMPSAQVKSLVAFAALHADGESRVIETLPSRNHTELMLDLKTEALSDGRRAVIIPGGKSLEARPFHIPADPSAACFMIALGLLVPGSEILLRDVCLNPTRAGYIELLIGAGADIGFENRRVIGGETIGDIVVRYSGSVEPLRIDEPSIVANIIDEIPMLAVFSACATAEFELHHAAELRTKESDRISAVVSNLQRLGFLCEEFPDGFAVKGRQRVPSGKVILESYDDHRIAMSFAIADKALESELEISDREIIGVSFPNFFDIIESLRQ.

Lys15, Ser16, and Arg20 together coordinate 3-phosphoshikimate. Lys15 is a phosphoenolpyruvate binding site. Phosphoenolpyruvate contacts are provided by Gly96 and Arg124. Residues Ser169, Gln171, Ser195, Asp319, and Lys346 each coordinate 3-phosphoshikimate. Residue Gln171 participates in phosphoenolpyruvate binding. Asp319 (proton acceptor) is an active-site residue. Phosphoenolpyruvate is bound by residues Arg350 and Arg394.

This sequence belongs to the EPSP synthase family. Monomer.

It is found in the cytoplasm. The catalysed reaction is 3-phosphoshikimate + phosphoenolpyruvate = 5-O-(1-carboxyvinyl)-3-phosphoshikimate + phosphate. The protein operates within metabolic intermediate biosynthesis; chorismate biosynthesis; chorismate from D-erythrose 4-phosphate and phosphoenolpyruvate: step 6/7. Catalyzes the transfer of the enolpyruvyl moiety of phosphoenolpyruvate (PEP) to the 5-hydroxyl of shikimate-3-phosphate (S3P) to produce enolpyruvyl shikimate-3-phosphate and inorganic phosphate. The chain is 3-phosphoshikimate 1-carboxyvinyltransferase from Prosthecochloris aestuarii (strain DSM 271 / SK 413).